Here is a 709-residue protein sequence, read N- to C-terminus: Ral guanine nucleotide dissociation stimulator-like 3 (709 aa).

The interval Val-26–Asp-55 is disordered. The N-terminal Ras-GEF domain maps to Lys-64–Lys-201. Disordered regions lie at residues Glu-203–Ser-225, Ser-395–Pro-416, and Pro-502–Pro-604. Residues Ser-248 to Pro-503 form the Ras-GEF domain. Composition is skewed to low complexity over residues Pro-502 to Pro-511 and Ser-533 to Pro-551. Phosphoserine occurs at positions 506 and 510. A compositionally biased stretch (pro residues) spans Gly-552 to Gln-576. Phosphoserine occurs at positions 553, 568, 572, 577, and 600. Residues Ser-611 to Ala-706 form an interaction with HRAS, MRAS and RIT1 region. In terms of domain architecture, Ras-associating spans Glu-612–Gly-699.

In terms of assembly, interacts with GTP-bound forms of RIT1, HRAS and MRAS. In terms of tissue distribution, widely expressed. Expressed at high levels in the liver and kidney.

In terms of biological role, guanine nucleotide exchange factor (GEF) for Ral-A. Potential effector of GTPase HRas and Ras-related protein M-Ras. Negatively regulates Elk-1-dependent gene induction downstream of HRas and MEKK1. In Mus musculus (Mouse), this protein is Ral guanine nucleotide dissociation stimulator-like 3 (Rgl3).